The following is a 183-amino-acid chain: Peptidyl-tRNA hydrolase (183 aa).

A tRNA-binding site is contributed by tyrosine 14. Residue histidine 19 is the Proton acceptor of the active site. Positions 61, 63, and 109 each coordinate tRNA.

It belongs to the PTH family. Monomer.

It is found in the cytoplasm. The enzyme catalyses an N-acyl-L-alpha-aminoacyl-tRNA + H2O = an N-acyl-L-amino acid + a tRNA + H(+). Its function is as follows. Hydrolyzes ribosome-free peptidyl-tRNAs (with 1 or more amino acids incorporated), which drop off the ribosome during protein synthesis, or as a result of ribosome stalling. Catalyzes the release of premature peptidyl moieties from peptidyl-tRNA molecules trapped in stalled 50S ribosomal subunits, and thus maintains levels of free tRNAs and 50S ribosomes. This Aliarcobacter butzleri (strain RM4018) (Arcobacter butzleri) protein is Peptidyl-tRNA hydrolase.